A 294-amino-acid polypeptide reads, in one-letter code: Acetyl-coenzyme A carboxylase carboxyl transferase subunit beta (294 aa).

Positions 25 to 294 (VWTKCTACEQ…PFLEPEIIAD (270 aa)) constitute a CoA carboxyltransferase N-terminal domain. 4 residues coordinate Zn(2+): Cys-29, Cys-32, Cys-48, and Cys-51. The segment at 29–51 (CTACEQVLYRDELKRHLEVCPKC) adopts a C4-type zinc-finger fold.

The protein belongs to the AccD/PCCB family. As to quaternary structure, acetyl-CoA carboxylase is a heterohexamer composed of biotin carboxyl carrier protein (AccB), biotin carboxylase (AccC) and two subunits each of ACCase subunit alpha (AccA) and ACCase subunit beta (AccD). The cofactor is Zn(2+).

The protein resides in the cytoplasm. It carries out the reaction N(6)-carboxybiotinyl-L-lysyl-[protein] + acetyl-CoA = N(6)-biotinyl-L-lysyl-[protein] + malonyl-CoA. It participates in lipid metabolism; malonyl-CoA biosynthesis; malonyl-CoA from acetyl-CoA: step 1/1. Component of the acetyl coenzyme A carboxylase (ACC) complex. Biotin carboxylase (BC) catalyzes the carboxylation of biotin on its carrier protein (BCCP) and then the CO(2) group is transferred by the transcarboxylase to acetyl-CoA to form malonyl-CoA. The chain is Acetyl-coenzyme A carboxylase carboxyl transferase subunit beta from Actinobacillus succinogenes (strain ATCC 55618 / DSM 22257 / CCUG 43843 / 130Z).